The primary structure comprises 422 residues: E3 ubiquitin-protein ligase IE2 (422 aa).

Residues 1–10 show a composition bias toward polar residues; the sequence is MSRQINAVTP. 2 disordered regions span residues 1-86 and 165-215; these read MSRQ…VQII and SPRS…EGEE. The segment covering 14–26 has biased composition (basic residues); sequence SRRHRLSLSRRRI. Residues 36–63 show a composition bias toward low complexity; it reads PSSSSRSQPSSSSRSQPYSSSRSQPYSS. A compositionally biased stretch (basic and acidic residues) spans 71–80; the sequence is ERSQEQRVSE. Residues 179–196 show a composition bias toward polar residues; the sequence is DVLSQSPDLFDSPQSPQQ. Residues 200-215 show a composition bias toward acidic residues; the sequence is ELEDEDEEEEEEEGEE. Residues 220–268 form an RING-type; degenerate zinc finger; it reads CNICFTTLKDTKNVDSSFVTSIDCNHAVCFKCYVRIIMDNSTYKCFCSA. Residues 314–414 are a coiled coil; it reads IDLNDVERLE…RRNSELVAEL (101 aa).

It belongs to the alphabaculovirus IE2 protein family. Homooligomer. Auto-ubiquitinated.

The protein localises to the host nucleus. It carries out the reaction S-ubiquitinyl-[E2 ubiquitin-conjugating enzyme]-L-cysteine + [acceptor protein]-L-lysine = [E2 ubiquitin-conjugating enzyme]-L-cysteine + N(6)-ubiquitinyl-[acceptor protein]-L-lysine.. Its function is as follows. RING-finger E3 ubiquitin ligase that plays an important regulatory role during the initial stages of infection. Migrates to specific nuclear foci early in infection supposely to prepare the sites for viral replication by targeting and ubiquitinating host proteins. In Bombyx mori nuclear polyhedrosis virus (BmNPV), this protein is E3 ubiquitin-protein ligase IE2 (IE2).